The primary structure comprises 429 residues: Bifunctional protein GlmU (429 aa).

A pyrophosphorylase region spans residues 1–223; that stretch reads MKTSILILAA…EDEFMGINDK (223 aa). UDP-N-acetyl-alpha-D-glucosamine is bound by residues 8–11, Lys-22, and 81–82; these read LAAG and GT. Asp-102 contacts Mg(2+). Residues Gly-135, Glu-149, Asn-164, and Asn-221 each contribute to the UDP-N-acetyl-alpha-D-glucosamine site. Asn-221 provides a ligand contact to Mg(2+). Positions 224–244 are linker; it reads FELSIAENFMQEKIKKYWMQQ. Residues 245-429 form an N-acetyltransferase region; sequence GVIFHLPQST…KDYYYKKFQK (185 aa). Residues Arg-308 and Lys-325 each contribute to the UDP-N-acetyl-alpha-D-glucosamine site. His-336 serves as the catalytic Proton acceptor. 2 residues coordinate UDP-N-acetyl-alpha-D-glucosamine: Tyr-339 and Asn-350. Acetyl-CoA contacts are provided by residues 359 to 360, Ser-378, Ala-396, and Arg-413; that span reads NY.

In the N-terminal section; belongs to the N-acetylglucosamine-1-phosphate uridyltransferase family. This sequence in the C-terminal section; belongs to the transferase hexapeptide repeat family. In terms of assembly, homotrimer. Mg(2+) serves as cofactor.

The protein resides in the cytoplasm. It catalyses the reaction alpha-D-glucosamine 1-phosphate + acetyl-CoA = N-acetyl-alpha-D-glucosamine 1-phosphate + CoA + H(+). The catalysed reaction is N-acetyl-alpha-D-glucosamine 1-phosphate + UTP + H(+) = UDP-N-acetyl-alpha-D-glucosamine + diphosphate. It participates in nucleotide-sugar biosynthesis; UDP-N-acetyl-alpha-D-glucosamine biosynthesis; N-acetyl-alpha-D-glucosamine 1-phosphate from alpha-D-glucosamine 6-phosphate (route II): step 2/2. Its pathway is nucleotide-sugar biosynthesis; UDP-N-acetyl-alpha-D-glucosamine biosynthesis; UDP-N-acetyl-alpha-D-glucosamine from N-acetyl-alpha-D-glucosamine 1-phosphate: step 1/1. It functions in the pathway bacterial outer membrane biogenesis; LPS lipid A biosynthesis. Catalyzes the last two sequential reactions in the de novo biosynthetic pathway for UDP-N-acetylglucosamine (UDP-GlcNAc). The C-terminal domain catalyzes the transfer of acetyl group from acetyl coenzyme A to glucosamine-1-phosphate (GlcN-1-P) to produce N-acetylglucosamine-1-phosphate (GlcNAc-1-P), which is converted into UDP-GlcNAc by the transfer of uridine 5-monophosphate (from uridine 5-triphosphate), a reaction catalyzed by the N-terminal domain. In Campylobacter jejuni subsp. jejuni serotype O:6 (strain 81116 / NCTC 11828), this protein is Bifunctional protein GlmU.